The primary structure comprises 388 residues: L-lactate dehydrogenase (388 aa).

One can recognise an FMN hydroxy acid dehydrogenase domain in the interval 1-380 (MIISAASDYR…SADALSRVTR (380 aa)). Residue Y24 participates in substrate binding. Residues S106 and Q127 each coordinate FMN. Y129 lines the substrate pocket. T155 contacts FMN. R164 lines the substrate pocket. K251 contacts FMN. The active-site Proton acceptor is the H275. R278 is a binding site for substrate. 306 to 330 (DSGIRSGLDVVRMLALGADAVLLGR) contacts FMN.

Belongs to the FMN-dependent alpha-hydroxy acid dehydrogenase family. It depends on FMN as a cofactor.

It localises to the cell inner membrane. It carries out the reaction (S)-lactate + A = pyruvate + AH2. Functionally, catalyzes the conversion of L-lactate to pyruvate. Is coupled to the respiratory chain. The chain is L-lactate dehydrogenase from Xanthomonas euvesicatoria pv. vesicatoria (strain 85-10) (Xanthomonas campestris pv. vesicatoria).